Consider the following 327-residue polypeptide: MTSIKVHCLVSCFCEIIKRRSDIDFRPFYFGLWDGDFDITEGGIISYHSENINHDHYLLWYEKLYGMKVNEWYDHAKDKDSNVETFLQLVENKPENRYVIVMVDMSLLPERENKFHQKPFPHYLMISETEKEEEWFMLDPDFRWEGNMEREKVLYSVQDNPFGGGYFIDVEEIQEPTAEMVASYFIETFKRNDNELTMELKNLIIKMANEEEGYLLSGLVAAVKQIPVLAIRKYSYEHAFAYFRETLQYSEQEFDYWCDRVEDIVQGFTNVQYRAIKMAMTNNKGMLLSIVEKLDEMNAIELQIKTELERQFLSWKEMKSNESVLVF.

The catalysed reaction is N(8)-citryl-spermidine + 3,4-dihydroxybenzoyl-[aryl-carrier protein] = N(1)-(3,4-dihydroxybenzoyl)-N(8)-citryl-spermidine + holo-[aryl-carrier protein] + H(+). It carries out the reaction N(8),N'(8)-citryl-bis(spermidine) + 3,4-dihydroxybenzoyl-[aryl-carrier protein] = N(1)-(3,4-dihydroxybenzoyl)-N(8),N'(8)-citryl-bis(spermidine) + holo-[aryl-carrier protein] + H(+). It catalyses the reaction N(1)-(3,4-dihydroxybenzoyl)-N(8),N'(8)-citryl-bis(spermidine) + 3,4-dihydroxybenzoyl-[aryl-carrier protein] = petrobactin + holo-[aryl-carrier protein] + H(+). The protein operates within siderophore biosynthesis; petrobactin biosynthesis. Its function is as follows. Involved in the biosynthesis of petrobactin, a catecholate siderophore that functions in both iron acquisition and virulence. Transfers the activated 3,4-dihydroxybenzoate (3,4-DHBA) moiety from 3,4-DHBA-loaded AsbD to different receipient molecules, including N-citryl-spermidine, N8,N'8-citryl-bis(spermidine) and N1-(3,4-dihydroxybenzoyl)-N8,N'8-citryl-bis(spermidine). Also catalyzes the transfer of the activated 3,4-DHBA moiety from 3,4-DHBA-loaded AsbD to spermidine to generate DHB-spermidine (DHB-SP). This is Petrobactin synthase from Bacillus anthracis.